Reading from the N-terminus, the 72-residue chain is MIIPVRCFSCGRVIASDYVRFTEACTKIINETGREPRGEEKAKILDDLGVKRYCCRRMILSHKDLIDEVLPY.

Zn(2+) is bound by residues C7, C10, C54, and C55.

This sequence belongs to the archaeal Rpo10/eukaryotic RPB10 RNA polymerase subunit family. Part of the RNA polymerase complex. Zn(2+) is required as a cofactor.

Its subcellular location is the cytoplasm. It catalyses the reaction RNA(n) + a ribonucleoside 5'-triphosphate = RNA(n+1) + diphosphate. Functionally, DNA-dependent RNA polymerase (RNAP) catalyzes the transcription of DNA into RNA using the four ribonucleoside triphosphates as substrates. The polypeptide is DNA-directed RNA polymerase subunit Rpo10 (Picrophilus torridus (strain ATCC 700027 / DSM 9790 / JCM 10055 / NBRC 100828 / KAW 2/3)).